Here is a 290-residue protein sequence, read N- to C-terminus: Acetyl-coenzyme A carboxylase carboxyl transferase subunit beta (290 aa).

A CoA carboxyltransferase N-terminal domain is found at 27-290 (LWVKCPSCEA…LQRQPADALA (264 aa)). The Zn(2+) site is built by Cys31, Cys34, Cys50, and Cys53. The segment at 31–53 (CPSCEAVLYRNDVDANLHVCPKC) adopts a C4-type zinc-finger fold.

The protein belongs to the AccD/PCCB family. In terms of assembly, acetyl-CoA carboxylase is a heterohexamer composed of biotin carboxyl carrier protein (AccB), biotin carboxylase (AccC) and two subunits each of ACCase subunit alpha (AccA) and ACCase subunit beta (AccD). It depends on Zn(2+) as a cofactor.

It is found in the cytoplasm. The enzyme catalyses N(6)-carboxybiotinyl-L-lysyl-[protein] + acetyl-CoA = N(6)-biotinyl-L-lysyl-[protein] + malonyl-CoA. It functions in the pathway lipid metabolism; malonyl-CoA biosynthesis; malonyl-CoA from acetyl-CoA: step 1/1. Component of the acetyl coenzyme A carboxylase (ACC) complex. Biotin carboxylase (BC) catalyzes the carboxylation of biotin on its carrier protein (BCCP) and then the CO(2) group is transferred by the transcarboxylase to acetyl-CoA to form malonyl-CoA. This chain is Acetyl-coenzyme A carboxylase carboxyl transferase subunit beta, found in Burkholderia cenocepacia (strain ATCC BAA-245 / DSM 16553 / LMG 16656 / NCTC 13227 / J2315 / CF5610) (Burkholderia cepacia (strain J2315)).